Reading from the N-terminus, the 259-residue chain is Kynurenine formamidase (259 aa).

Positions 34–38 (HGGAW) match the HGGXW motif. Serine 103 (nucleophile) is an active-site residue. Active-site residues include aspartate 196 and histidine 228.

Belongs to the kynurenine formamidase family. In terms of assembly, homodimer.

The enzyme catalyses N-formyl-L-kynurenine + H2O = L-kynurenine + formate + H(+). Its pathway is amino-acid degradation; L-tryptophan degradation via kynurenine pathway; L-kynurenine from L-tryptophan: step 2/2. Catalyzes the hydrolysis of N-formyl-L-kynurenine to L-kynurenine, the second step in the kynurenine pathway of tryptophan degradation. Kynurenine may be further oxidized to nicotinic acid, NAD(H) and NADP(H). Required for elimination of toxic metabolites. The chain is Kynurenine formamidase from Meyerozyma guilliermondii (strain ATCC 6260 / CBS 566 / DSM 6381 / JCM 1539 / NBRC 10279 / NRRL Y-324) (Yeast).